We begin with the raw amino-acid sequence, 406 residues long: Tryptophan synthase beta chain (406 aa).

K99 carries the post-translational modification N6-(pyridoxal phosphate)lysine.

This sequence belongs to the TrpB family. Tetramer of two alpha and two beta chains. Pyridoxal 5'-phosphate is required as a cofactor.

It carries out the reaction (1S,2R)-1-C-(indol-3-yl)glycerol 3-phosphate + L-serine = D-glyceraldehyde 3-phosphate + L-tryptophan + H2O. Its pathway is amino-acid biosynthesis; L-tryptophan biosynthesis; L-tryptophan from chorismate: step 5/5. The beta subunit is responsible for the synthesis of L-tryptophan from indole and L-serine. The polypeptide is Tryptophan synthase beta chain (Methylobacterium nodulans (strain LMG 21967 / CNCM I-2342 / ORS 2060)).